Reading from the N-terminus, the 449-residue chain is Signal recognition particle protein (449 aa).

Residues 109–116 (GLQGSGKT), 191–195 (DTAGR), and 249–252 (SRID) each bind GTP.

The protein belongs to the GTP-binding SRP family. SRP54 subfamily. As to quaternary structure, part of the signal recognition particle protein translocation system, which is composed of SRP and FtsY. SRP is a ribonucleoprotein composed of Ffh and a 4.5S RNA molecule.

Its subcellular location is the cytoplasm. It carries out the reaction GTP + H2O = GDP + phosphate + H(+). Functionally, involved in targeting and insertion of nascent membrane proteins into the cytoplasmic membrane. Binds to the hydrophobic signal sequence of the ribosome-nascent chain (RNC) as it emerges from the ribosomes. The SRP-RNC complex is then targeted to the cytoplasmic membrane where it interacts with the SRP receptor FtsY. Interaction with FtsY leads to the transfer of the RNC complex to the Sec translocase for insertion into the membrane, the hydrolysis of GTP by both Ffh and FtsY, and the dissociation of the SRP-FtsY complex into the individual components. This Rickettsia conorii (strain ATCC VR-613 / Malish 7) protein is Signal recognition particle protein.